Here is a 219-residue protein sequence, read N- to C-terminus: Probable octanoyltransferase (219 aa).

A BPL/LPL catalytic domain is found at 43–219 (QPPKPTIITS…NNLDSFLMSK (177 aa)). Substrate is bound by residues 83–90 (RGGQTTFH), 151–153 (AIG), and 164–166 (GLA). Cys-182 (acyl-thioester intermediate) is an active-site residue.

It belongs to the LipB family.

The enzyme catalyses octanoyl-[ACP] + L-lysyl-[protein] = N(6)-octanoyl-L-lysyl-[protein] + holo-[ACP] + H(+). The protein operates within protein modification; protein lipoylation via endogenous pathway; protein N(6)-(lipoyl)lysine from octanoyl-[acyl-carrier-protein]: step 1/2. In terms of biological role, catalyzes the transfer of endogenously produced octanoic acid from octanoyl-acyl-carrier-protein onto the lipoyl domains of lipoate-dependent enzymes. Lipoyl-ACP can also act as a substrate although octanoyl-ACP is likely to be the physiological substrate. This Schizosaccharomyces pombe (strain 972 / ATCC 24843) (Fission yeast) protein is Probable octanoyltransferase.